We begin with the raw amino-acid sequence, 772 residues long: Tubulin monoglycylase TTLL3 (772 aa).

A disordered region spans residues 50 to 81 (PTLLPPQKDLDSSAMGDSDTTEDEDEDEDEEF). Residues 68-81 (DTTEDEDEDEDEEF) are compositionally biased toward acidic residues. The TTL domain occupies 151–510 (ARNVLKLVVK…RMLDRNCDTG (360 aa)). ATP-binding positions include lysine 283, 289 to 290 (RG), 321 to 324 (QKYI), 334 to 336 (KFD), and 378 to 379 (CN). Arginine 289 contacts a protein. Serine 381 is an L-glutamate binding site. The Mg(2+) site is built by aspartate 456, glutamate 469, and asparagine 471. ATP is bound at residue glutamate 469.

Mg(2+) serves as cofactor. Expressed in brain, heart, kidney, testis, liver, lung, muscle, spleen, trachea and colon.

The protein localises to the cytoplasm. Its subcellular location is the cytoskeleton. It localises to the cell projection. It is found in the cilium. The protein resides in the cilium axoneme. The protein localises to the flagellum axoneme. It catalyses the reaction L-glutamyl-[protein] + glycine + ATP = glycyl-L-glutamyl-[protein] + ADP + phosphate + H(+). Its function is as follows. Monoglycylase which modifies alpha- and beta-tubulin, adding a single glycine on the gamma-carboxyl groups of specific glutamate residues to generate monoglycine side chains within the C-terminal tail of tubulin. Not involved in elongation step of the polyglycylation reaction. Preferentially glycylates a beta-tail peptide over the alpha-tail, although shifts its preference toward alpha-tail as beta-tail glutamylation increases. Competes with polyglutamylases for modification site on beta-tubulin substrate, thereby creating an anticorrelation between glycylation and glutamylation reactions. Together with TTLL8, mediates microtubule glycylation of primary and motile cilia, which is essential for their stability and maintenance. Involved in microtubule glycylation of primary cilia in colon which controls cell proliferation of epithelial cells and plays an essential role in colon cancer development. Together with TTLL8, glycylates sperm flagella which regulates axonemal dynein motor activity, thereby controlling flagellar beat, directional sperm swimming and male fertility. This Homo sapiens (Human) protein is Tubulin monoglycylase TTLL3.